The chain runs to 703 residues: uncharacterized protein (703 aa).

Transmembrane regions (helical) follow at residues 23–43 (IAMS…DFLI), 69–89 (ALSG…AAGG), 143–163 (PVIS…ALEA), and 250–270 (PPEW…PIGL). Residues 23-335 (IAMSGAISAG…INNDPFEFVR (313 aa)) form the PNPLA domain. Positions 72-76 (GASAG) match the GXSXG motif. The active-site Nucleophile is Ser74. The Proton acceptor role is filled by Asp322. A DGA/G motif is present at residues 322–324 (DGG). 3 helical membrane passes run 357 to 377 (VIMI…EPPL), 432 to 452 (ETFS…LEAF), and 644 to 664 (ILST…APWT).

Its subcellular location is the cell membrane. This is an uncharacterized protein from Sinorhizobium fredii (strain NBRC 101917 / NGR234).